Here is a 479-residue protein sequence, read N- to C-terminus: Calcium uniporter protein, mitochondrial (479 aa).

The N-terminal 54 residues, 1 to 54 (MNHALRRATLGLSPGLRASRLQQSFAKHQIPAVYRCEAASTPLQRAFTTSRCFR), are a transit peptide targeting the mitochondrion. Topologically, residues 55–323 (QETAAESEKD…DTLAHQGAHR (269 aa)) are mitochondrial matrix. Disordered regions lie at residues 56 to 125 (ETAA…KGRL) and 206 to 238 (EADQNEQDGRKDDNKKKDNANVASYSGLGHEGP). A coiled-coil region spans residues 59–79 (AESEKDDAARREEQSERARKR). The segment covering 60–75 (ESEKDDAARREEQSER) has biased composition (basic and acidic residues). The span at 83–93 (NVTSGSSAQTL) shows a compositional bias: polar residues. Basic and acidic residues-rich tracts occupy residues 94 to 122 (ENDRPWHRADSGADPDAPKDVPENKDMKK) and 206 to 224 (EADQNEQDGRKDDNKKKDN). A helical transmembrane segment spans residues 324–344 (LAQGGFAALAGWWGVVYYVTF). At 345–354 (HTQAGWDLVE) the chain is on the mitochondrial intermembrane side. The short motif at 350 to 358 (WDLVEPVTY) is the Selectivity filter element. E354 serves as a coordination point for Ca(2+). The helical transmembrane segment at 355 to 375 (PVTYLAGLTTVMGAYLWFLYI) threads the bilayer. Topologically, residues 376–479 (SRDLSYKAAM…GSSDKIKKKQ (104 aa)) are mitochondrial matrix. A compositionally biased stretch (basic and acidic residues) spans 445–462 (KVLEEEKQGRDGTKVTEG). A disordered region spans residues 445–479 (KVLEEEKQGRDGTKVTEGKDEDDGPGSSDKIKKKQ).

Belongs to the MCU (TC 1.A.77) family. Homotetramer, assembles in a dimer or dimers configuration with two interfaces.

It is found in the mitochondrion inner membrane. It catalyses the reaction Ca(2+)(in) = Ca(2+)(out). Functionally, highly selective calcium channel localized to the inner mitochondrial membrane, which mediates calcium uptake into the mitochondrial matrix. Mitochondrial calcium homeostasis plays key roles in cellular physiology and regulates ATP production, cytoplasmic calcium signals and activation of cell death pathways. Sufficient to operate as a pore-forming channel without the need of calcium-sensor or auxiliary subunit. The polypeptide is Calcium uniporter protein, mitochondrial (Gibberella zeae (strain ATCC MYA-4620 / CBS 123657 / FGSC 9075 / NRRL 31084 / PH-1) (Wheat head blight fungus)).